Reading from the N-terminus, the 320-residue chain is Olfactory receptor 2W1 (320 aa).

Residues 1–25 (MDQSNYSSLHGFILLGFSNHPKMEM) lie on the Extracellular side of the membrane. An N-linked (GlcNAc...) asparagine glycan is attached at asparagine 5. Residues 26–49 (ILSGVVAIFYLITLVGNTAIILAS) traverse the membrane as a helical segment. Residues 50 to 57 (LLDSQLHT) are Cytoplasmic-facing. A helical membrane pass occupies residues 58 to 79 (PMYFFLRNLSFLDLCFTTSIIP). At 80-100 (QMLVNLWGPDKTISYVGCIIQ) the chain is on the extracellular side. The cysteines at positions 97 and 189 are disulfide-linked. The chain crosses the membrane as a helical span at residues 101 to 120 (LYVYMWLGSVECLLLAVMSY). Residues 121-139 (DRFTAICKPLHYFVVMNPH) are Cytoplasmic-facing. A helical transmembrane segment spans residues 140–158 (LCLKMIIMIWSISLANSVV). At 159–195 (LCTLTLNLPTCGNNILDHFLCELPALVKIACVDTTTV) the chain is on the extracellular side. A helical transmembrane segment spans residues 196 to 219 (EMSVFALGIIIVLTPLILILISYG). Residues 220–236 (YIAKAVLRTKSKASQRK) are Cytoplasmic-facing. Residues 237–259 (AMNTCGSHLTVVSMFYGTIIYMY) traverse the membrane as a helical segment. At 260–272 (LQPGNRASKDQGK) the chain is on the extracellular side. The helical transmembrane segment at 273–292 (FLTLFYTVITPSLNPLIYTL) threads the bilayer. The Cytoplasmic segment spans residues 293–320 (RNKDMKDALKKLMRFHHKSTKIKRNCKS).

This sequence belongs to the G-protein coupled receptor 1 family.

It localises to the cell membrane. Functionally, odorant receptor. The polypeptide is Olfactory receptor 2W1 (OR2W1) (Homo sapiens (Human)).